The chain runs to 193 residues: Orotate phosphoribosyltransferase (193 aa).

Residues Arg85, Lys89, His91, and 111 to 119 (DDVLTTGKS) contribute to the 5-phospho-alpha-D-ribose 1-diphosphate site. Orotate contacts are provided by Thr115 and Arg143.

It belongs to the purine/pyrimidine phosphoribosyltransferase family. PyrE subfamily. As to quaternary structure, homodimer. The cofactor is Mg(2+).

It catalyses the reaction orotidine 5'-phosphate + diphosphate = orotate + 5-phospho-alpha-D-ribose 1-diphosphate. It functions in the pathway pyrimidine metabolism; UMP biosynthesis via de novo pathway; UMP from orotate: step 1/2. Its function is as follows. Catalyzes the transfer of a ribosyl phosphate group from 5-phosphoribose 1-diphosphate to orotate, leading to the formation of orotidine monophosphate (OMP). In Pyrobaculum islandicum (strain DSM 4184 / JCM 9189 / GEO3), this protein is Orotate phosphoribosyltransferase.